The primary structure comprises 212 residues: Ras-related protein Rab-2A (212 aa).

An N-acetylalanine modification is found at A2. A required for interaction with PRKCI region spans residues 2–19; it reads AYAYLFKYIIIGDTGVGK. Positions 16, 17, 18, 19, 20, 21, and 38 each coordinate GTP. S20 provides a ligand contact to Mg(2+). A Switch 1 motif is present at residues 37-42; sequence LTIGVE. Positions 38 and 61 each coordinate Mg(2+). Residues 63–72 carry the Switch 2 motif; it reads AGQESFRSIT. Positions 64, 119, 120, 122, 150, and 151 each coordinate GTP. S-geranylgeranyl cysteine attachment occurs at residues C211 and C212.

It belongs to the small GTPase superfamily. Rab family. Interacts with PRKCI. Interacts with TRIP11. Interacts (in GTP-bound form) with GARIN1B. Interacts (GTP-bound) with HOPS complex component VPS39; interaction contributes to obtaining a functional HOPS complex that promotes autophagosome-lysosome membrane fusion driven by STX17-SNAP29-VAMP8. May interact with VPS41. The cofactor is Mg(2+). In terms of processing, prenylated. Prenylation is required for association with cellular membranes.

It localises to the endoplasmic reticulum-Golgi intermediate compartment membrane. It is found in the melanosome. The protein resides in the endoplasmic reticulum membrane. The protein localises to the golgi apparatus membrane. Its subcellular location is the cytoplasmic vesicle. It localises to the secretory vesicle. It is found in the acrosome. The protein resides in the autophagosome membrane. It catalyses the reaction GTP + H2O = GDP + phosphate + H(+). Its activity is regulated as follows. Regulated by guanine nucleotide exchange factors (GEFs) which promote the exchange of bound GDP for free GTP, GTPase activating proteins (GAPs) which increase the GTP hydrolysis activity, and GDP dissociation inhibitors (GDIs) which inhibit the dissociation of the nucleotide from the GTPase. Its function is as follows. The small GTPases Rab are key regulators of intracellular membrane trafficking, from the formation of transport vesicles to their fusion with membranes. Rabs cycle between active GTP-bound and inactive GDP-bound states. In their active state, drive transport of vesicular carriers from donor organelles to acceptor organelles to regulate the membrane traffic that maintains organelle identity and morphology. RAB2A regulates autophagy by promoting autophagosome-lysosome fusion via recruitment of the HOPS endosomal tethering complex; this process involves autophagosomal RAB2A and lysosomal RAB39A recruitment of HOPS subcomplexes VPS39-VPS11 and VPS41-VPS16-VPS18-VPS33A, respectively, which assemble into a functional complex to mediate membrane tethering and SNAREs-driven membrane fusion. Required for protein transport from the endoplasmic reticulum to the Golgi complex. Regulates the compacted morphology of the Golgi. Together with RAB2B, redundantly required for efficient autophagic flux. The chain is Ras-related protein Rab-2A (RAB2A) from Canis lupus familiaris (Dog).